Consider the following 142-residue polypeptide: Large ribosomal subunit protein uL11 (142 aa).

This sequence belongs to the universal ribosomal protein uL11 family. Part of the ribosomal stalk of the 50S ribosomal subunit. Interacts with L10 and the large rRNA to form the base of the stalk. L10 forms an elongated spine to which L12 dimers bind in a sequential fashion forming a multimeric L10(L12)X complex. Post-translationally, one or more lysine residues are methylated.

In terms of biological role, forms part of the ribosomal stalk which helps the ribosome interact with GTP-bound translation factors. The protein is Large ribosomal subunit protein uL11 of Bartonella quintana (strain Toulouse) (Rochalimaea quintana).